The following is an 85-amino-acid chain: Large ribosomal subunit protein bL27 (85 aa).

The interval 1-22 (MAHKKAGGSTNNGRDSESKRLG) is disordered.

The protein belongs to the bacterial ribosomal protein bL27 family.

This chain is Large ribosomal subunit protein bL27, found in Vibrio atlanticus (strain LGP32) (Vibrio splendidus (strain Mel32)).